The primary structure comprises 194 residues: Imidazoleglycerol-phosphate dehydratase (194 aa).

This sequence belongs to the imidazoleglycerol-phosphate dehydratase family.

Its subcellular location is the cytoplasm. It carries out the reaction D-erythro-1-(imidazol-4-yl)glycerol 3-phosphate = 3-(imidazol-4-yl)-2-oxopropyl phosphate + H2O. It functions in the pathway amino-acid biosynthesis; L-histidine biosynthesis; L-histidine from 5-phospho-alpha-D-ribose 1-diphosphate: step 6/9. This Bacillus velezensis (strain DSM 23117 / BGSC 10A6 / LMG 26770 / FZB42) (Bacillus amyloliquefaciens subsp. plantarum) protein is Imidazoleglycerol-phosphate dehydratase.